A 401-amino-acid chain; its full sequence is Exodeoxyribonuclease 7 large subunit (401 aa).

Belongs to the XseA family. Heterooligomer composed of large and small subunits.

It localises to the cytoplasm. The catalysed reaction is Exonucleolytic cleavage in either 5'- to 3'- or 3'- to 5'-direction to yield nucleoside 5'-phosphates.. Bidirectionally degrades single-stranded DNA into large acid-insoluble oligonucleotides, which are then degraded further into small acid-soluble oligonucleotides. In Syntrophotalea carbinolica (strain DSM 2380 / NBRC 103641 / GraBd1) (Pelobacter carbinolicus), this protein is Exodeoxyribonuclease 7 large subunit.